Consider the following 816-residue polypeptide: Neuronal PAS domain-containing protein 2 (816 aa).

Positions 1-10 are enriched in basic and acidic residues; it reads MDEDEKDRAK. Positions 1-21 are disordered; the sequence is MDEDEKDRAKRASRNKSEKKR. The interval 1-61 is sufficient for heterodimer formation with BMAL1, E-box binding and for the effect of NADPH; that stretch reads MDEDEKDRAK…VIGFLQKHNE (61 aa). One can recognise a bHLH domain in the interval 9 to 59; the sequence is AKRASRNKSEKKRRDQFNVLIKELSSMLPGNTRKMDKTTVLEKVIGFLQKH. One can recognise a PAS 1 domain in the interval 82 to 152; that stretch reads NEEFTQLMLE…KILSSHMLVT (71 aa). His119 and His171 together coordinate heme b. Residues 237–307 enclose the PAS 2 domain; the sequence is FLKEMCVADE…RCHQHLMQFG (71 aa). One can recognise a PAC domain in the interval 311–354; it reads SCCYRFLTKGQQWIWLQTHYYITYHQWNSKPEFIVCTHSVVSYA. 4 disordered regions span residues 364–431, 610–639, 685–705, and 742–816; these read LALE…STPT, ISAQGPKPMRSSQLLPASGRSLSSLPSQFS, QPMMPGSCDARQPSEVSRTGR, and PSFP…LSES. Positions 400–413 are enriched in low complexity; that stretch reads SGLPSSPSPSASSR. The span at 420-431 shows a compositional bias: polar residues; sequence HTAMSEPTSTPT. Over residues 623–639 the composition is skewed to low complexity; it reads LLPASGRSLSSLPSQFS. A compositionally biased stretch (low complexity) spans 745 to 759; sequence PASRPSPLQPAQAQQ. The span at 780-789 shows a compositional bias: polar residues; the sequence is LLSTFSQQPG. Over residues 806-816 the composition is skewed to basic residues; sequence PSRRVSRLSES.

Component of the circadian clock oscillator which includes the CRY proteins, CLOCK or NPAS2, BMAL1 or BMAL2, CSNK1D and/or CSNK1E, TIMELESS and the PER proteins. Efficient DNA binding requires dimerization with another bHLH protein. Interacts with NCOA3, KAT2B and CREBBP. Forms a heterodimer with BMAL1 and this heterodimerization is required for E-box-dependent transactivation. Interacts with EP300. The cofactor is heme. Expressed in the retinal ganglion cells (at protein level). Expressed in the hypothalamic suprachiasmatic nuclei (SCN) of the brain. Also found in spinal cord, and to a lesser extent in colon, small intestine and uterus. Exhibits a diurnal variation in its expression in the brain.

Its subcellular location is the nucleus. Its activity is regulated as follows. Carbon monoxide (CO) and the redox state of the cell can modulate the transcriptional activity of the NPAS2-BMAL1 heterodimer. NADH and NADPH enhance the DNA-binding activity of the heterodimer whereas CO binds the heme group in NPAS2 and inhibits the DNA-binding activity of the heterodimer. Its function is as follows. Transcriptional activator which forms a core component of the circadian clock. The circadian clock, an internal time-keeping system, regulates various physiological processes through the generation of approximately 24 hour circadian rhythms in gene expression, which are translated into rhythms in metabolism and behavior. It is derived from the Latin roots 'circa' (about) and 'diem' (day) and acts as an important regulator of a wide array of physiological functions including metabolism, sleep, body temperature, blood pressure, endocrine, immune, cardiovascular, and renal function. Consists of two major components: the central clock, residing in the suprachiasmatic nucleus (SCN) of the brain, and the peripheral clocks that are present in nearly every tissue and organ system. Both the central and peripheral clocks can be reset by environmental cues, also known as Zeitgebers (German for 'timegivers'). The predominant Zeitgeber for the central clock is light, which is sensed by retina and signals directly to the SCN. The central clock entrains the peripheral clocks through neuronal and hormonal signals, body temperature and feeding-related cues, aligning all clocks with the external light/dark cycle. Circadian rhythms allow an organism to achieve temporal homeostasis with its environment at the molecular level by regulating gene expression to create a peak of protein expression once every 24 hours to control when a particular physiological process is most active with respect to the solar day. Transcription and translation of core clock components (CLOCK, NPAS2, BMAL1, BMAL2, PER1, PER2, PER3, CRY1 and CRY2) plays a critical role in rhythm generation, whereas delays imposed by post-translational modifications (PTMs) are important for determining the period (tau) of the rhythms (tau refers to the period of a rhythm and is the length, in time, of one complete cycle). A diurnal rhythm is synchronized with the day/night cycle, while the ultradian and infradian rhythms have a period shorter and longer than 24 hours, respectively. Disruptions in the circadian rhythms contribute to the pathology of cardiovascular diseases, cancer, metabolic syndromes and aging. A transcription/translation feedback loop (TTFL) forms the core of the molecular circadian clock mechanism. Transcription factors, CLOCK or NPAS2 and BMAL1 or BMAL2, form the positive limb of the feedback loop, act in the form of a heterodimer and activate the transcription of core clock genes and clock-controlled genes (involved in key metabolic processes), harboring E-box elements (5'-CACGTG-3') within their promoters. The core clock genes: PER1/2/3 and CRY1/2 which are transcriptional repressors form the negative limb of the feedback loop and interact with the CLOCK|NPAS2-BMAL1|BMAL2 heterodimer inhibiting its activity and thereby negatively regulating their own expression. This heterodimer also activates nuclear receptors NR1D1/2 and RORA/B/G, which form a second feedback loop and which activate and repress BMAL1 transcription, respectively. The NPAS2-BMAL1 heterodimer positively regulates the expression of MAOA, F7 and LDHA and modulates the circadian rhythm of daytime contrast sensitivity by regulating the rhythmic expression of adenylate cyclase type 1 (ADCY1) in the retina. NPAS2 plays an important role in sleep homeostasis and in maintaining circadian behaviors in normal light/dark and feeding conditions and in the effective synchronization of feeding behavior with scheduled food availability. Regulates the gene transcription of key metabolic pathways in the liver and is involved in DNA damage response by regulating several cell cycle and DNA repair genes. Controls the circadian rhythm of NR0B2 expression by binding rhythmically to its promoter. Mediates the diurnal variation in the expression of GABARA1 receptor in the brain and contributes to the regulation of anxiety-like behaviors and GABAergic neurotransmission in the ventral striatum. This chain is Neuronal PAS domain-containing protein 2 (Npas2), found in Mus musculus (Mouse).